The primary structure comprises 272 residues: Cytochrome b-c1 complex subunit Rieske, mitochondrial (272 aa).

Residues 77–104 (VHNDVTVPDFSAYRREDVMDATTSSQTS) are Mitochondrial matrix-facing. Residues 105-138 (SEDRKGFSYLVTATACVATAYAAKNVVTQFISSL) form a helical membrane-spanning segment. The Mitochondrial intermembrane segment spans residues 139–272 (SASADVLALS…FVGDDLVVVG (134 aa)). Positions 185-270 (EAEVDVSKLR…YQFVGDDLVV (86 aa)) constitute a Rieske domain. Residues Cys215, His217, Leu218, Cys234, His237, and Ser239 each contribute to the [2Fe-2S] cluster site. A disulfide bridge links Cys220 with Cys236.

Belongs to the Rieske iron-sulfur protein family. In terms of assembly, component of the ubiquinol-cytochrome c oxidoreductase (cytochrome b-c1 complex, complex III, CIII), a multisubunit enzyme composed of 11 subunits. The complex is composed of 3 respiratory subunits cytochrome b, cytochrome c1 and Rieske protein UQCRFS1, 2 core protein subunits UQCRC1/QCR1 and UQCRC2/QCR2, and 6 low-molecular weight protein subunits UQCRH/QCR6, UQCRB/QCR7, UQCRQ/QCR8, UQCR10/QCR9, UQCR11/QCR10 and subunit 9, the cleavage product of Rieske protein UQCRFS1. The complex exists as an obligatory dimer and forms supercomplexes (SCs) in the inner mitochondrial membrane with NADH-ubiquinone oxidoreductase (complex I, CI) and cytochrome c oxidase (complex IV, CIV), resulting in different assemblies (supercomplex SCI(1)III(2)IV(1) and megacomplex MCI(2)III(2)IV(2)). Incorporation of the Rieske protein UQCRFS1 is the penultimate step in complex III assembly. Interacts with TTC19, which is involved in the clearance of UQCRFS1 fragments. As to quaternary structure, component of the ubiquinol-cytochrome c oxidoreductase (cytochrome b-c1 complex, complex III, CIII). Subunit 9 corresponds to the mitochondrial targeting sequence (MTS) of Rieske protein UQCRFS1. It is retained after processing and incorporated inside complex III, where it remains bound to the complex and localizes between the 2 core subunits UQCRC1/QCR1 and UQCRC2/QCR2. Requires [2Fe-2S] cluster as cofactor. Post-translationally, proteolytic processing is necessary for the correct insertion of UQCRFS1 in the complex III dimer. Several fragments are generated during UQCRFS1 insertion, most probably due to the endogenous matrix-processing peptidase (MPP) activity of the 2 core protein subunits UQCRC1/QCR1 and UQCRC2/QCR2, which are homologous to the 2 mitochondrial-processing peptidase (MPP) subunits beta-MPP and alpha-MPP respectively. The action of the protease is also necessary for the clearance of the UQCRFS1 fragments.

The protein localises to the mitochondrion inner membrane. The enzyme catalyses a quinol + 2 Fe(III)-[cytochrome c](out) = a quinone + 2 Fe(II)-[cytochrome c](out) + 2 H(+)(out). Functionally, component of the ubiquinol-cytochrome c oxidoreductase, a multisubunit transmembrane complex that is part of the mitochondrial electron transport chain which drives oxidative phosphorylation. The respiratory chain contains 3 multisubunit complexes succinate dehydrogenase (complex II, CII), ubiquinol-cytochrome c oxidoreductase (cytochrome b-c1 complex, complex III, CIII) and cytochrome c oxidase (complex IV, CIV), that cooperate to transfer electrons derived from NADH and succinate to molecular oxygen, creating an electrochemical gradient over the inner membrane that drives transmembrane transport and the ATP synthase. The cytochrome b-c1 complex catalyzes electron transfer from ubiquinol to cytochrome c, linking this redox reaction to translocation of protons across the mitochondrial inner membrane, with protons being carried across the membrane as hydrogens on the quinol. In the process called Q cycle, 2 protons are consumed from the matrix, 4 protons are released into the intermembrane space and 2 electrons are passed to cytochrome c. The Rieske protein is a catalytic core subunit containing a [2Fe-2S] iron-sulfur cluster. It cycles between 2 conformational states during catalysis to transfer electrons from the quinol bound in the Q(0) site in cytochrome b to cytochrome c1. Incorporation of UQCRFS1 is the penultimate step in complex III assembly. In terms of biological role, component of the ubiquinol-cytochrome c oxidoreductase (cytochrome b-c1 complex, complex III, CIII). UQCRFS1 undergoes proteolytic processing once it is incorporated in the complex III dimer. One of the fragments, called subunit 9, corresponds to its mitochondrial targeting sequence (MTS). The proteolytic processing is necessary for the correct insertion of UQCRFS1 in the complex III dimer, but the persistence of UQCRFS1-derived fragments may prevent newly imported UQCRFS1 to be processed and assembled into complex III and is detrimental for the complex III structure and function. This chain is Cytochrome b-c1 complex subunit Rieske, mitochondrial (UQCRFS1), found in Gallus gallus (Chicken).